A 447-amino-acid polypeptide reads, in one-letter code: Chordin-like protein 1 (447 aa).

The signal sequence occupies residues 1–22 (MEGIKYIASLVFFFVFLEASKT). VWFC domains lie at 30 to 95 (TYCM…PRCP) and 108 to 174 (KSCE…RVCR). An N-linked (GlcNAc...) asparagine glycan is attached at Asn113. Residues 174-176 (RGD) carry the Cell attachment site motif. Positions 199-219 (HSYLRSPYDPPPSRQAGGLPR) are disordered. A VWFC 3 domain is found at 253–318 (QVCVSNGKTY…LDGKCCKVCP (66 aa)). A glycan (N-linked (GlcNAc...) asparagine) is linked at Asn286.

The protein resides in the secreted. Seems to antagonize the function of BMP4 by binding to it and preventing its interaction with receptors. Alters the fate commitment of neural stem cells from gliogenesis to neurogenesis. Contributes to neuronal differentiation of neural stem cells in the brain by preventing the adoption of a glial fate. May play a crucial role in dorsoventral axis formation. May play a role in embryonic bone formation. Plays a role during anterior segment eye development. This Rattus norvegicus (Rat) protein is Chordin-like protein 1 (Chrdl1).